Reading from the N-terminus, the 313-residue chain is MAMNVLQSPSRPGLGKVSGFFWHNPGLGLFLLLLGPLMWFGIVYFGSLLTLLWQGFYTFDDFTMSVTPELTLANIRALFNPANYDIILRTLTMAVAVTIASAILAFPMAWYMARYTSGKMKAFFYIAVMLPMWASYIVKAYAWTLLLAKDGVAQWFLQHLGLEPLLTAFLTLPAVGGNTLSTSGLGRFLVFLYIWLPFMILPVQAALERLPPSLLQASADLGARPRQTFRYVVLPLAIPGIAAGSIFTFSLTLGDFIVPQLVGPPGYFIGNMVYSQQGAIGNMPMAAAFTLVPIILIALYLAFVKRLGAFDAL.

Topologically, residues 1–25 (MAMNVLQSPSRPGLGKVSGFFWHNP) are cytoplasmic. Residues 26 to 46 (GLGLFLLLLGPLMWFGIVYFG) traverse the membrane as a helical segment. The Periplasmic segment spans residues 47-92 (SLLTLLWQGFYTFDDFTMSVTPELTLANIRALFNPANYDIILRTLT). An ABC transmembrane type-1 domain is found at 87-302 (ILRTLTMAVA…PIILIALYLA (216 aa)). The chain crosses the membrane as a helical span at residues 93 to 113 (MAVAVTIASAILAFPMAWYMA). At 114–122 (RYTSGKMKA) the chain is on the cytoplasmic side. A helical transmembrane segment spans residues 123–143 (FFYIAVMLPMWASYIVKAYAW). Topologically, residues 144–154 (TLLLAKDGVAQ) are periplasmic. A helical transmembrane segment spans residues 155–175 (WFLQHLGLEPLLTAFLTLPAV). Over 176–187 (GGNTLSTSGLGR) the chain is Cytoplasmic. A helical transmembrane segment spans residues 188–208 (FLVFLYIWLPFMILPVQAALE). Residues 209–230 (RLPPSLLQASADLGARPRQTFR) lie on the Periplasmic side of the membrane. The chain crosses the membrane as a helical span at residues 231 to 251 (YVVLPLAIPGIAAGSIFTFSL). A topological domain (cytoplasmic) is located at residue T252. Residues 253–273 (LGDFIVPQLVGPPGYFIGNMV) form a helical membrane-spanning segment. Residues 274–283 (YSQQGAIGNM) are Periplasmic-facing. A helical membrane pass occupies residues 284–304 (PMAAAFTLVPIILIALYLAFV). Residues 305–313 (KRLGAFDAL) are Cytoplasmic-facing.

It belongs to the binding-protein-dependent transport system permease family. CysTW subfamily.

The protein localises to the cell inner membrane. Its function is as follows. Probably part of the ABC transporter complex YdcSTUV. Probably responsible for the translocation of the substrate across the membrane. The polypeptide is Inner membrane ABC transporter permease protein YdcU (ydcU) (Escherichia coli (strain K12)).